Consider the following 1733-residue polypeptide: Desertorin synthase (1733 aa).

The N-terminal acylcarrier protein transacylase domain (SAT) stretch occupies residues arginine 21–tryptophan 358. Residues aspartate 372–glutamate 799 enclose the Ketosynthase family 3 (KS3) domain. Over residues histidine 406 to glycine 422 the composition is skewed to basic and acidic residues. The segment at histidine 406–glutamine 429 is disordered. Active-site for beta-ketoacyl synthase activity residues include cysteine 544, histidine 679, and histidine 718. Residues phenylalanine 903–methionine 1211 are malonyl-CoA:ACP transacylase (MAT) domain. The N-terminal hotdog fold stretch occupies residues histidine 1288–serine 1420. A PKS/mFAS DH domain is found at histidine 1288 to histidine 1598. The segment at glycine 1299 to arginine 1594 is product template (PT) domain. The Proton acceptor; for dehydratase activity role is filled by histidine 1320. The segment at alanine 1448–histidine 1598 is C-terminal hotdog fold. Residue aspartate 1506 is the Proton donor; for dehydratase activity of the active site. The tract at residues histidine 1608–glutamine 1659 is disordered. The span at serine 1627 to proline 1643 shows a compositional bias: low complexity. Residues glutamine 1659 to leucine 1733 enclose the Carrier domain. Serine 1696 is subject to O-(pantetheine 4'-phosphoryl)serine.

Pantetheine 4'-phosphate is required as a cofactor.

It functions in the pathway secondary metabolite biosynthesis. Functionally, non-reducing polyketide synthase; part of the gene cluster that mediates the biosynthesis of the bicoumarin desertorin. The non-reducing polyketide synthase desS first catalyzes the formation of the pentaketidic 4,7-dihydroxy-5-methylcoumarin from acetyl coenzyme A and 4 malonyl coenzyme A molecules. Further O-methylation by desB leads to the formation of 7-demethylsiderin. Then, an oxidative phenol coupling catalyzed by the cytochrome P450 monooxygenase desC forms the 6,8'-dimer M-desertorin A via dimerization the monomeric precursor, 7-demethylsiderin. M-desertorin A is further converted to M-desertorin C. The protein is Desertorin synthase of Aspergillus desertorum (Emericella desertorum).